Reading from the N-terminus, the 62-residue chain is Large ribosomal subunit protein uL15 (62 aa).

This sequence belongs to the universal ribosomal protein uL15 family.

In Candida albicans (Yeast), this protein is Large ribosomal subunit protein uL15 (RPL28).